The primary structure comprises 339 residues: Photosystem II assembly lipoprotein Ycf48 (339 aa).

The first 23 residues, 1–23, serve as a signal peptide directing secretion; the sequence is MNRLIKFSFNLILIFVLGLGLSG. Cysteine 24 carries the N-palmitoyl cysteine lipid modification. Cysteine 24 carries S-diacylglycerol cysteine lipidation.

The protein belongs to the Ycf48 family. In terms of assembly, part of early PSII assembly complexes which includes D1 (psbA) and PsbI; not found in mature PSII. Binds to the lumenal side of PSII complexes. Interacts with YidC.

It is found in the cellular thylakoid membrane. Functionally, a factor required for optimal assembly of photosystem II (PSII), acting in the early stages of PSII assembly. Also plays a role in replacement of photodamaged D1 (psbA). Assists YidC in synthesis of chlorophyll-binding proteins. This Prochlorococcus marinus (strain SARG / CCMP1375 / SS120) protein is Photosystem II assembly lipoprotein Ycf48.